The sequence spans 238 residues: HTH-type transcriptional regulator TreR (238 aa).

In terms of domain architecture, HTH gntR-type spans 1 to 71; it reads MKVNKFITIY…RGKGSVVLNR (71 aa). The H-T-H motif DNA-binding region spans 31–50; the sequence is EHELTAQYGTSRETVRKALH.

Dimer of dimers.

Its function is as follows. Repressor for the trePA operon. It is able to bind trehalose-6-phosphate. The polypeptide is HTH-type transcriptional regulator TreR (treR) (Bacillus subtilis (strain 168)).